We begin with the raw amino-acid sequence, 625 residues long: ATP-dependent RNA helicase mrh4, mitochondrial (625 aa).

A mitochondrion-targeting transit peptide spans 1-16 (MWKTARDSVCLICRSA). Low complexity predominate over residues 19–28 (TTTSTSARAS). The segment at 19-119 (TTTSTSARAS…DKNTKGQKAL (101 aa)) is disordered. Over residues 90–113 (DPRKAPKPKPVEEDSRRDKRDKNT) the composition is skewed to basic and acidic residues. Positions 144 to 177 (QAFDQFDLLPVVKEAIAQEALKGMTEIKPTPVQR) match the Q motif motif. The Helicase ATP-binding domain occupies 195–406 (PKSDNGREEF…EEQFPYINRI (212 aa)). Residue 208 to 215 (AETGSGKT) coordinates ATP. The DEAD box signature appears at 353–356 (DEAD). In terms of domain architecture, Helicase C-terminal spans 453–625 (EGPKSEIDVK…ESMFMGQALV (173 aa)).

It belongs to the DEAD box helicase family. MRH4 subfamily.

Its subcellular location is the mitochondrion. It carries out the reaction ATP + H2O = ADP + phosphate + H(+). In terms of biological role, ATP-binding RNA helicase involved in mitochondrial RNA metabolism. Required for maintenance of mitochondrial DNA. This chain is ATP-dependent RNA helicase mrh4, mitochondrial (drh-15), found in Neurospora crassa (strain ATCC 24698 / 74-OR23-1A / CBS 708.71 / DSM 1257 / FGSC 987).